The chain runs to 1262 residues: Ras-specific guanine nucleotide-releasing factor 1 (1262 aa).

The PH 1 domain maps to 22-130; it reads DGTRKGYLSK…WVAAIARASY (109 aa). At S71 the chain carries Phosphoserine; by PLK2. One can recognise an IQ domain in the interval 208–233; sequence KKIKKVQSFLRGWLCRRKWKNIIQDY. A DH domain is found at 244 to 430; it reads KRNQVVFSML…EELSRIMHDE (187 aa). The 129-residue stretch at 460–588 folds into the PH 2 domain; that stretch reads TFVRQGSLMQ…WTSDIIQCVD (129 aa). Residues S581 and S617 each carry the phosphoserine; by PLK2 modification. The 115-residue stretch at 635-749 folds into the N-terminal Ras-GEF domain; sequence KVLQIRYASV…RRRKLSLNIP (115 aa). Residues 714–738 form a disordered region; that stretch reads DAPKSPRASRKFSSPPPLAIGTSSP. S745 is subject to Phosphoserine. A Phosphoserine; by PLK2 modification is found at S766. The segment at 800-854 is disordered; sequence EEIDVPATIPEKPGELSASRKHSSDVLKEESEDDQNHSDEDNTEVSPVKSPPTPK. Positions 821 to 839 are enriched in basic and acidic residues; that stretch reads HSSDVLKEESEDDQNHSDE. A Ras-GEF domain is found at 1027–1259; that stretch reads PALEIAEQLT…YESSLLIEPK (233 aa).

Homooligomer and heterooligomer with RASGRF2. Interacts with USP8, thereby regulating its stability. Phosphorylated by PLK2, leading to ubiquitination and degradation by the proteasome. In terms of processing, ubiquitinated and degraded following phosphorylation by PLK2. Post-translationally, phosphorylated by SRC and LCK. Phosphorylation by LCK increases its capacity to stimulate the GDP/GTP exchange on Ras, whereas its phosphorylation by SRC seems not to have an effect on stimulation activity. In terms of tissue distribution, brain.

Functionally, promotes the exchange of Ras-bound GDP by GTP. This is Ras-specific guanine nucleotide-releasing factor 1 (Rasgrf1) from Mus musculus (Mouse).